We begin with the raw amino-acid sequence, 767 residues long: Golgin subfamily A member 1 (767 aa).

The disordered stretch occupies residues 13–58 (TAVAQRPGGATRIPRSVSKESVASMGADSGDDFASDGSSSREDLSS). Phosphoserine occurs at positions 30, 36, 41, 47, 50, and 51. A coiled-coil region spans residues 50–657 (SSSREDLSSQ…RKTLQKELKI (608 aa)). In terms of domain architecture, GRIP spans 688 to 737 (TDAREINFEYLKHVVLKFMSCRESEAFHLIKAVSVLLNFSQEEENMLKET). A disordered region spans residues 748–767 (KPAPKGSIRPSISNPRIPWS).

As to quaternary structure, interacts with RAB6A. Directly interacts with TBC1D23. Interacts with FAM91A1; this interaction may be mediated by TBC1D23. Interacts with ARL1; this interaction recruits Golgin-97/GOLGA1 onto the Golgi apparatus. Post-translationally, MARylated by PARP12; MARylation is required for basolateral export of E-Cadherin.

The protein resides in the golgi apparatus membrane. Its subcellular location is the golgi apparatus. It is found in the trans-Golgi network membrane. The protein localises to the cytoplasmic vesicle. It localises to the secretory vesicle. The protein resides in the acrosome. Functionally, involved in vesicular trafficking at the Golgi apparatus level. Involved in endosome-to-Golgi trafficking. Mechanistically, captures transport vesicles arriving from endosomes via the protein TBC1D23. Recognized vesicles are then tethered to the trans-Golgi before subsequent SNARE engagement and vesicle fusion. Selectively regulates E-cadherin transport from the trans-Golgi network in tubulovesicular carriers. Its function is as follows. (Microbial infection) Plays an important role in poxvirus morphogenesis. Translocates into the viral factories where it may transport the membrane fragments and associated protein factors important for virus maturation to the sites of virion assembly. The protein is Golgin subfamily A member 1 (GOLGA1) of Homo sapiens (Human).